A 429-amino-acid chain; its full sequence is Glutamate-1-semialdehyde 2,1-aminomutase (429 aa).

At lysine 265 the chain carries N6-(pyridoxal phosphate)lysine.

This sequence belongs to the class-III pyridoxal-phosphate-dependent aminotransferase family. HemL subfamily. Homodimer. Pyridoxal 5'-phosphate is required as a cofactor.

Its subcellular location is the cytoplasm. The catalysed reaction is (S)-4-amino-5-oxopentanoate = 5-aminolevulinate. It participates in porphyrin-containing compound metabolism; protoporphyrin-IX biosynthesis; 5-aminolevulinate from L-glutamyl-tRNA(Glu): step 2/2. The polypeptide is Glutamate-1-semialdehyde 2,1-aminomutase (Azotobacter vinelandii (strain DJ / ATCC BAA-1303)).